Reading from the N-terminus, the 285-residue chain is Gap junction Cx32.2 protein (285 aa).

Residues 2–19 are Cytoplasmic-facing; it reads GDLGFLSKLLDQVQSHST. A helical membrane pass occupies residues 20–40; sequence VIGKIWMTVLFLFRIMVLGAG. Over 41–76 the chain is Extracellular; sequence AESVWGDEQSDFTCNTQQPGCENVCYDWTFPISHIR. The chain crosses the membrane as a helical span at residues 77–99; it reads FWVLQIIFVSTPTLIYLGHAMHI. The Cytoplasmic portion of the chain corresponds to 100–148; sequence IQQETKLRARLSSPGGSRLCKQPKYTNEQGKVKIKGNLLGSYLTQLVFK. Residues 149–171 form a helical membrane-spanning segment; that stretch reads IIIEAAFIVGQYYLYGFIMVPMF. Residues 172 to 194 are Extracellular-facing; sequence PCSKKPCPFTVECYMSRPTEKTI. The helical transmembrane segment at 195-217 threads the bilayer; sequence FIIFMLVVACVSLLLNVIEVFYL. Residues 218–285 are Cytoplasmic-facing; sequence ICTRVRCGSR…AKEEKRLLSH (68 aa). The interval 264–285 is disordered; the sequence is ETSQSIGGSLDGAKEEKRLLSH. The segment covering 275–285 has biased composition (basic and acidic residues); sequence GAKEEKRLLSH.

This sequence belongs to the connexin family. Beta-type (group I) subfamily. In terms of assembly, a connexon is composed of a hexamer of connexins.

The protein resides in the cell membrane. It localises to the cell junction. The protein localises to the gap junction. In terms of biological role, one gap junction consists of a cluster of closely packed pairs of transmembrane channels, the connexons, through which materials of low MW diffuse from one cell to a neighboring cell. May be involved in ovarian follicular maturation. This is Gap junction Cx32.2 protein from Micropogonias undulatus (Atlantic croaker).